Reading from the N-terminus, the 110-residue chain is UPF0060 membrane protein Psyc_0916 (110 aa).

The next 4 membrane-spanning stretches (helical) occupy residues 7–27 (VGLFAITALAEIAGCYLPYLW), 33–53 (SIWLLIPGALSLVAFVWLLSL), 63–83 (AAYGGVYISMAILWLWTVNGI), and 87–107 (TWDIVGSVVALIGMAIIMFAP).

Belongs to the UPF0060 family.

It localises to the cell inner membrane. This Psychrobacter arcticus (strain DSM 17307 / VKM B-2377 / 273-4) protein is UPF0060 membrane protein Psyc_0916.